The following is a 466-amino-acid chain: Glutamate--tRNA ligase 2 (466 aa).

The short motif at 11–21 (PSPTGFLHIGG) is the 'HIGH' region element. The short motif at 239–243 (KLSKR) is the 'KMSKS' region element. Lys242 serves as a coordination point for ATP.

It belongs to the class-I aminoacyl-tRNA synthetase family. Glutamate--tRNA ligase type 1 subfamily. Monomer.

The protein localises to the cytoplasm. The catalysed reaction is tRNA(Glu) + L-glutamate + ATP = L-glutamyl-tRNA(Glu) + AMP + diphosphate. Functionally, catalyzes the attachment of glutamate to tRNA(Glu) in a two-step reaction: glutamate is first activated by ATP to form Glu-AMP and then transferred to the acceptor end of tRNA(Glu). The polypeptide is Glutamate--tRNA ligase 2 (Roseobacter denitrificans (strain ATCC 33942 / OCh 114) (Erythrobacter sp. (strain OCh 114))).